Reading from the N-terminus, the 136-residue chain is Large ribosomal subunit protein uL16 (136 aa).

Belongs to the universal ribosomal protein uL16 family. Part of the 50S ribosomal subunit.

Binds 23S rRNA and is also seen to make contacts with the A and possibly P site tRNAs. This Rickettsia typhi (strain ATCC VR-144 / Wilmington) protein is Large ribosomal subunit protein uL16.